A 779-amino-acid chain; its full sequence is Aconitate hydratase, mitochondrial (779 aa).

Residues 1–28 (MIAMDRIARIPIARWTSRAFRVSAAARQ) constitute a mitochondrion transit peptide. Substrate is bound by residues Gln97 and 190-192 (DSH). 3 residues coordinate [4Fe-4S] cluster: Cys383, Cys446, and Cys449. Residues Arg472, Arg477, Arg605, and 668 to 669 (SR) each bind substrate.

It belongs to the aconitase/IPM isomerase family. As to quaternary structure, monomer. It depends on [4Fe-4S] cluster as a cofactor.

It is found in the mitochondrion. The catalysed reaction is citrate = D-threo-isocitrate. Its pathway is carbohydrate metabolism; tricarboxylic acid cycle; isocitrate from oxaloacetate: step 2/2. In terms of biological role, catalyzes the isomerization of citrate to isocitrate via cis-aconitate. The chain is Aconitate hydratase, mitochondrial from Gracilaria gracilis (Red alga).